Here is a 445-residue protein sequence, read N- to C-terminus: Methyl-CpG-binding domain protein 4-like protein (445 aa).

The active site involves aspartate 429.

In terms of tissue distribution, isoform 1 and isoform 4: Expressed in leaves and flowers, but not in roots or stems.

It is found in the nucleus. Functionally, monofunctional DNA glycosylase targeting U:G and T:G mispairs. Excises uracil derivatives and exhibits a preference for a CpG sequence context, irrespective of the methylation status of the complementary strand. The activity follows a biphasic kinetics, with an initial burst of product accumulation followed by a slower phase. Specifically binds its reaction product. Triggers the base excision repair (BER) pathway. The polypeptide is Methyl-CpG-binding domain protein 4-like protein (Arabidopsis thaliana (Mouse-ear cress)).